A 273-amino-acid chain; its full sequence is Probable cysteine-rich repeat secretory protein 6 (273 aa).

The signal sequence occupies residues 1–21 (MTRIIDVSLFCFFLFSLGAMS). Gnk2-homologous domains lie at 22–122 (QPSQ…DNSF) and 128–241 (DSPA…ISAL).

The protein belongs to the cysteine-rich repeat secretory protein family.

It is found in the secreted. In Arabidopsis thaliana (Mouse-ear cress), this protein is Probable cysteine-rich repeat secretory protein 6 (CRRSP6).